The primary structure comprises 353 residues: Quinolinate synthase (353 aa).

Positions 49 and 70 each coordinate iminosuccinate. Cys-115 is a binding site for [4Fe-4S] cluster. Iminosuccinate-binding positions include 141 to 143 and Ser-158; that span reads YAN. Cys-202 provides a ligand contact to [4Fe-4S] cluster. Residues 228–230 and Thr-245 contribute to the iminosuccinate site; that span reads HPE. Cys-299 serves as a coordination point for [4Fe-4S] cluster.

This sequence belongs to the quinolinate synthase family. Type 1 subfamily. The cofactor is [4Fe-4S] cluster.

The protein localises to the cytoplasm. It catalyses the reaction iminosuccinate + dihydroxyacetone phosphate = quinolinate + phosphate + 2 H2O + H(+). It functions in the pathway cofactor biosynthesis; NAD(+) biosynthesis; quinolinate from iminoaspartate: step 1/1. Catalyzes the condensation of iminoaspartate with dihydroxyacetone phosphate to form quinolinate. The chain is Quinolinate synthase from Marinobacter nauticus (strain ATCC 700491 / DSM 11845 / VT8) (Marinobacter aquaeolei).